Here is a 690-residue protein sequence, read N- to C-terminus: Glycine--tRNA ligase beta subunit (690 aa).

This sequence belongs to the class-II aminoacyl-tRNA synthetase family. Tetramer of two alpha and two beta subunits.

The protein localises to the cytoplasm. The enzyme catalyses tRNA(Gly) + glycine + ATP = glycyl-tRNA(Gly) + AMP + diphosphate. The chain is Glycine--tRNA ligase beta subunit from Syntrophus aciditrophicus (strain SB).